The chain runs to 307 residues: Ribosomal protein L11 methyltransferase (307 aa).

The S-adenosyl-L-methionine site is built by Thr156, Gly177, Asp199, and Asn243.

It belongs to the methyltransferase superfamily. PrmA family.

The protein resides in the cytoplasm. The catalysed reaction is L-lysyl-[protein] + 3 S-adenosyl-L-methionine = N(6),N(6),N(6)-trimethyl-L-lysyl-[protein] + 3 S-adenosyl-L-homocysteine + 3 H(+). Functionally, methylates ribosomal protein L11. The protein is Ribosomal protein L11 methyltransferase of Syntrophomonas wolfei subsp. wolfei (strain DSM 2245B / Goettingen).